The sequence spans 178 residues: Probable chorismate pyruvate-lyase (178 aa).

The substrate site is built by Arg73, Leu111, and Glu163.

It belongs to the UbiC family.

The protein localises to the cytoplasm. It catalyses the reaction chorismate = 4-hydroxybenzoate + pyruvate. The protein operates within cofactor biosynthesis; ubiquinone biosynthesis. Its function is as follows. Removes the pyruvyl group from chorismate, with concomitant aromatization of the ring, to provide 4-hydroxybenzoate (4HB) for the ubiquinone pathway. The protein is Probable chorismate pyruvate-lyase of Pseudomonas aeruginosa (strain UCBPP-PA14).